We begin with the raw amino-acid sequence, 782 residues long: Endonuclease MutS2 (782 aa).

Residue 336-343 (GPNTGGKT) coordinates ATP. The Smr domain occupies 707–782 (LDLRGYRYEE…GFGVTVAELK (76 aa)).

Belongs to the DNA mismatch repair MutS family. MutS2 subfamily. In terms of assembly, homodimer. Binds to stalled ribosomes, contacting rRNA.

Endonuclease that is involved in the suppression of homologous recombination and thus may have a key role in the control of bacterial genetic diversity. Functionally, acts as a ribosome collision sensor, splitting the ribosome into its 2 subunits. Detects stalled/collided 70S ribosomes which it binds and splits by an ATP-hydrolysis driven conformational change. Acts upstream of the ribosome quality control system (RQC), a ribosome-associated complex that mediates the extraction of incompletely synthesized nascent chains from stalled ribosomes and their subsequent degradation. Probably generates substrates for RQC. The protein is Endonuclease MutS2 of Staphylococcus epidermidis (strain ATCC 35984 / DSM 28319 / BCRC 17069 / CCUG 31568 / BM 3577 / RP62A).